The following is a 968-amino-acid chain: A disintegrin and metalloproteinase with thrombospondin motifs 1 (968 aa).

Disordered stretches follow at residues 1–23 (MQPK…DVQR) and 177–253 (APAV…RKKR). The signal sequence occupies residues 1–48 (MQPKVPLGSRKQKPCSDMGDVQRAARSRGSLSAHMLLLLLASITMLLC). Positions 49–253 (ARGAHGRPTE…SGPGSIRKKR (205 aa)) are excised as a propeptide. The Cysteine switch signature appears at 204 to 211 (AKCGVMDD). Cys-206 contacts Zn(2+). Residues 214 to 229 (LPTSDSRPESQNTRNQ) show a composition bias toward polar residues. The Peptidase M12B domain occupies 259–468 (RYVETMLVAD…GHGECLMDKP (210 aa)). Residues Glu-262, Asp-345, and Asp-352 each coordinate Ca(2+). 4 cysteine pairs are disulfide-bonded: Cys-334–Cys-386, Cys-363–Cys-368, Cys-380–Cys-463, and Cys-418–Cys-447. His-402 lines the Zn(2+) pocket. Residue Glu-403 is part of the active site. Zn(2+)-binding residues include His-406 and His-412. Ca(2+) contacts are provided by Cys-463 and Asp-466. The region spanning 477 to 559 (DLPGTLYDAN…TDMKHFATPV (83 aa)) is the Disintegrin domain. Intrachain disulfides connect Cys-489-Cys-512, Cys-500-Cys-522, Cys-507-Cys-541, and Cys-535-Cys-546. Asn-548 carries an N-linked (GlcNAc...) asparagine glycan. The TSP type-1 1 domain maps to 560–615 (HGSWGPWGPWGDCSRTCGGGVQYTMRECDNPVPKNGGKYCEGKRVRYRSCNIEDCP). Disulfide bonds link Cys-572–Cys-609, Cys-576–Cys-614, and Cys-587–Cys-599. Residues Asn-721, Asn-765, and Asn-783 are each glycosylated (N-linked (GlcNAc...) asparagine). The spacer stretch occupies residues 726–850 (KKMSGIVTST…YFMKKKTESF (125 aa)). TSP type-1 domains follow at residues 855–911 (TFSE…LPCP) and 912–968 (HWQV…TQCS). A glycan (N-linked (GlcNAc...) asparagine) is linked at Asn-946.

Zn(2+) is required as a cofactor. In terms of processing, the precursor is cleaved by a furin endopeptidase. Glycosylated. Can be O-fucosylated by POFUT2 on a serine or a threonine residue found within the consensus sequence C1-X(2)-(S/T)-C2-G of the TSP type-1 repeat domains where C1 and C2 are the first and second cysteine residue of the repeat, respectively. Fucosylated repeats can then be further glycosylated by the addition of a beta-1,3-glucose residue by the glucosyltransferase, B3GALTL. Fucosylation mediates the efficient secretion of ADAMTS family members. Can also be C-glycosylated with one or two mannose molecules on tryptophan residues within the consensus sequence W-X-X-W of the TPRs, and N-glycosylated. These other glycosylations can also facilitate secretion.

It is found in the secreted. The protein localises to the extracellular space. The protein resides in the extracellular matrix. Metalloprotease which cleaves aggrecan, a cartilage proteoglycan, at the '1691-Glu-|-Leu-1692' site (within the chondroitin sulfate attachment domain), and may be involved in its turnover. Also cleaves COMP. Has angiogenic inhibitor activity. May play a critical role in follicular rupture. In Mus musculus (Mouse), this protein is A disintegrin and metalloproteinase with thrombospondin motifs 1 (Adamts1).